The chain runs to 501 residues: Histidine--tRNA ligase (501 aa).

The protein belongs to the class-II aminoacyl-tRNA synthetase family. Homodimer.

The protein localises to the cytoplasm. It carries out the reaction tRNA(His) + L-histidine + ATP = L-histidyl-tRNA(His) + AMP + diphosphate + H(+). The polypeptide is Histidine--tRNA ligase (Methylocella silvestris (strain DSM 15510 / CIP 108128 / LMG 27833 / NCIMB 13906 / BL2)).